Reading from the N-terminus, the 480-residue chain is Protein nucleotidyltransferase YdiU (480 aa).

Gly-86, Gly-88, Arg-89, Lys-109, Asp-121, Gly-122, Arg-172, and Arg-179 together coordinate ATP. Residue Asp-248 is the Proton acceptor of the active site. 2 residues coordinate Mg(2+): Asn-249 and Asp-258. An ATP-binding site is contributed by Asp-258.

It belongs to the SELO family. Mg(2+) serves as cofactor. Requires Mn(2+) as cofactor.

It catalyses the reaction L-seryl-[protein] + ATP = 3-O-(5'-adenylyl)-L-seryl-[protein] + diphosphate. It carries out the reaction L-threonyl-[protein] + ATP = 3-O-(5'-adenylyl)-L-threonyl-[protein] + diphosphate. The enzyme catalyses L-tyrosyl-[protein] + ATP = O-(5'-adenylyl)-L-tyrosyl-[protein] + diphosphate. The catalysed reaction is L-histidyl-[protein] + UTP = N(tele)-(5'-uridylyl)-L-histidyl-[protein] + diphosphate. It catalyses the reaction L-seryl-[protein] + UTP = O-(5'-uridylyl)-L-seryl-[protein] + diphosphate. It carries out the reaction L-tyrosyl-[protein] + UTP = O-(5'-uridylyl)-L-tyrosyl-[protein] + diphosphate. Its function is as follows. Nucleotidyltransferase involved in the post-translational modification of proteins. It can catalyze the addition of adenosine monophosphate (AMP) or uridine monophosphate (UMP) to a protein, resulting in modifications known as AMPylation and UMPylation. The protein is Protein nucleotidyltransferase YdiU of Salmonella paratyphi C (strain RKS4594).